The following is a 625-amino-acid chain: Chaperone protein DnaK (625 aa).

Position 197 is a phosphothreonine; by autocatalysis (Thr-197). The interval Met-598–Glu-625 is disordered.

The protein belongs to the heat shock protein 70 family.

Its function is as follows. Acts as a chaperone. The protein is Chaperone protein DnaK of Campylobacter curvus (strain 525.92).